Here is an 829-residue protein sequence, read N- to C-terminus: Dipeptidyl peptidase family member 2 (829 aa).

The Cytoplasmic portion of the chain corresponds to 1 to 27 (MENDNYDVEEQGCSVFNGKHGYFARSC). Residues 28–48 (CVVFILIICVIFVFSVIFTFM) form a helical; Signal-anchor for type II membrane protein membrane-spanning segment. Over 49–829 (QNPINLNSDN…DCFKSNLDLL (781 aa)) the chain is Extracellular. N-linked (GlcNAc...) asparagine glycans are attached at residues asparagine 61, asparagine 66, asparagine 183, asparagine 209, asparagine 314, and asparagine 359. Cysteine 514 and cysteine 533 are oxidised to a cystine. Catalysis depends on serine 691, which acts as the Charge relay system. Cysteines 711 and 821 form a disulfide. The N-linked (GlcNAc...) asparagine glycan is linked to asparagine 754. Catalysis depends on charge relay system residues aspartate 768 and histidine 800.

Belongs to the peptidase S9B family. DPPIV subfamily.

It localises to the cell membrane. Functionally, removes N-terminal dipeptides sequentially from polypeptides. Essential for control of distal tip cell migration. This chain is Dipeptidyl peptidase family member 2 (dpf-2), found in Caenorhabditis elegans.